We begin with the raw amino-acid sequence, 967 residues long: MQDPASHSDSLVGRVEVKETTCYMCACRCGIRVHLRDGEVRYIDGNPNHPLNKGVICAKGSSGIMKQYSPGRLTQPLRRKAGAERGESAFEVISWDEAFAMLEERLAKLRAEDPKKFALFTGRDQMQALTGLFAKQYGTPNYAAHGGFCSVNMAAGLIYTIGGSFWEFGGPDLERAKLFVMIGTAEDHHSNPLKMAISEFKRRGGRFISVNPVRTGYSAVADEWVPIKPGTDGALLLAITREILDKGLFDRDFLVRYTNAAELVIDDPSRDDHGLFYRAEMHVEPDCFDPQNKLWWDRDIDGPISTHTPGADPRLMGRYVLPDGTPVKPSFQLLKERLEQYTPEWAAPITGIPADTIRRLAHEMGVMARDQKIELPIKWTDCWDDEHESVTGNPVAFHAMRGLAAHSNGFQTIRALGVLMTVLGTIDRPGGFRHKAPYPRPIPPCPKPPHGPEAVQPNTPLDGMPLGWPSKPEDLFVDAEGEAVRLDKAFSWEYPLSVHGLMHNVITNAWRGDPYPIDTLFLFMANMAWNSTMNTVEVRKMLVDKHPNGDYKIPFLVVCDTFASETVAFADLVLPDTSYLERHDVLSMLDRPISEFDGPVDSVRIPVLPPKGECKPFQEVLVELGSRLKLPAFTNADGSRKYRNYPDFIVNYETSPGSGIGFLAGWRGKGGDQFLKGEPNPHQWEMYAQNNCVYHHELPRSYQYMRNWNKGYLHWARAHGMIRYAEPITLHLYSEVLQRFRLAAQGKRPGRQPPERLRQRVETYFDPLPFYYEPLESRFTDTQRYPLNALTQRPMAMYHSWDSQNAWLRQIHSHNYLFLSPKVGLAQGFADGDWVWVESPHGKVRCMCRFSEAVEPGTVWTWNAIGKGAGAWGLAPNADEARKGFLLNHVIAEELPAHEAGEHLSNSDPVTGQAAWFDVRVRVYKAEAGEPEVTSPQFKPMPRLPGQEKKRGKWQAYVAGIFGKQAS.

The 4Fe-4S Mo/W bis-MGD-type domain maps to 15–71 (VEVKETTCYMCACRCGIRVHLRDGEVRYIDGNPNHPLNKGVICAKGSSGIMKQYSPG). Residues cysteine 22, cysteine 25, cysteine 29, and cysteine 57 each coordinate [4Fe-4S] cluster.

Belongs to the prokaryotic molybdopterin-containing oxidoreductase family. In terms of assembly, forms a heterotrimeric membrane-bound complex composed of a catalytic heterodimer (SoeAB) and a membrane anchor protein (SoeC). The cofactor is [4Fe-4S] cluster. It depends on Mo-bis(molybdopterin guanine dinucleotide) as a cofactor.

It localises to the cell inner membrane. The catalysed reaction is a quinone + sulfite + H2O = a quinol + sulfate. The enzyme catalyses a menaquinone + sulfite + H2O = a menaquinol + sulfate. In terms of biological role, part of the SoeABC complex that catalyzes the oxidation of sulfite to sulfate. The sequence is that of Sulfite dehydrogenase subunit A from Allochromatium vinosum (strain ATCC 17899 / DSM 180 / NBRC 103801 / NCIMB 10441 / D) (Chromatium vinosum).